The sequence spans 166 residues: Large ribosomal subunit protein uL10 (166 aa).

It belongs to the universal ribosomal protein uL10 family. In terms of assembly, part of the ribosomal stalk of the 50S ribosomal subunit. The N-terminus interacts with L11 and the large rRNA to form the base of the stalk. The C-terminus forms an elongated spine to which L12 dimers bind in a sequential fashion forming a multimeric L10(L12)X complex.

Forms part of the ribosomal stalk, playing a central role in the interaction of the ribosome with GTP-bound translation factors. In Pseudomonas entomophila (strain L48), this protein is Large ribosomal subunit protein uL10.